Here is a 1017-residue protein sequence, read N- to C-terminus: uncharacterized protein (1017 aa).

A signal peptide (tat-type signal) is located at residues 1–34; sequence MGNLTMSRRTFVKTAAITGAAAAAFGASTHTALA. The 4Fe-4S Mo/W bis-MGD-type domain occupies 45 to 103; the sequence is DTVAVKTCCRGCGKMECGVKVIVQNGRAIRVEGDEGAFQSMGNCCTKSQSSIQAAYHPD. Residues Cys53, Cys56, Cys61, and Cys89 each contribute to the [4Fe-4S] cluster site. Lys91 serves as the catalytic Electron donor/acceptor.

The protein belongs to the prokaryotic molybdopterin-containing oxidoreductase family. The cofactor is [4Fe-4S] cluster. Mo-bis(molybdopterin guanine dinucleotide) is required as a cofactor. In terms of processing, predicted to be exported by the Tat system. The position of the signal peptide cleavage has not been experimentally proven.

This is an uncharacterized protein from Eggerthella lenta (strain ATCC 25559 / DSM 2243 / CCUG 17323 / JCM 9979 / KCTC 3265 / NCTC 11813 / VPI 0255 / 1899 B) (Eubacterium lentum).